A 287-amino-acid polypeptide reads, in one-letter code: Acetylglutamate kinase (287 aa).

Substrate-binding positions include 70 to 71, Arg-92, and Asn-184; that span reads GG.

The protein belongs to the acetylglutamate kinase family. ArgB subfamily.

Its subcellular location is the cytoplasm. The enzyme catalyses N-acetyl-L-glutamate + ATP = N-acetyl-L-glutamyl 5-phosphate + ADP. It functions in the pathway amino-acid biosynthesis; L-arginine biosynthesis; N(2)-acetyl-L-ornithine from L-glutamate: step 2/4. Functionally, catalyzes the ATP-dependent phosphorylation of N-acetyl-L-glutamate. This chain is Acetylglutamate kinase, found in Roseobacter denitrificans (strain ATCC 33942 / OCh 114) (Erythrobacter sp. (strain OCh 114)).